We begin with the raw amino-acid sequence, 3093 residues long: Genome polyprotein (3093 aa).

The 149-residue stretch at 255-403 (KRLLRHVHQA…TTTGERIEYY (149 aa)) folds into the Peptidase S30 domain. Active-site for P1 proteinase activity residues include His-311, Asp-323, and Ser-355. The Peptidase C6 domain maps to 690–809 (HYVPKVGYCY…ASELKEYEIG (120 aa)). Catalysis depends on for helper component proteinase activity residues Cys-698 and His-769. One can recognise a Helicase ATP-binding domain in the interval 1215–1366 (RVLADKDNEF…AQKSLDIMTL (152 aa)). ATP is bound at residue 1228-1235 (GHVGCGKS). Positions 1316-1319 (DEVH) match the DEVH box motif. The 180-residue stretch at 1367 to 1546 (PTMTPLDFVK…QVPPVLRNVN (180 aa)) folds into the Helicase C-terminal domain. The Nuclear localization signal motif lies at 1883–1895 (DKVRKKANVHAMQ). An O-(5'-phospho-RNA)-tyrosine modification is found at Tyr-1915. One can recognise a Peptidase C4 domain in the interval 2041 to 2257 (SKALYGGPRC…VDVGGLYIHN (217 aa)). Residues His-2082, Asp-2121, and Cys-2193 each act as for nuclear inclusion protein A activity in the active site. One can recognise a RdRp catalytic domain in the interval 2516 to 2639 (EWFIDADGSQ…NANEEAKDVV (124 aa)). Residues 2800–2826 (NAAATSGATTPAQNVGAGTTTPAKATP) show a composition bias toward low complexity. Positions 2800 to 2842 (NAAATSGATTPAQNVGAGTTTPAKATPQSGRRPSFGSLIDNPI) are disordered.

It belongs to the potyviridae genome polyprotein family. In terms of processing, VPg is uridylylated by the polymerase and is covalently attached to the 5'-end of the genomic RNA. This uridylylated form acts as a nucleotide-peptide primer for the polymerase. Genome polyprotein of potyviruses undergoes post-translational proteolytic processing by the main proteinase NIa-pro resulting in the production of at least ten individual proteins. The P1 proteinase and the HC-pro cleave only their respective C-termini autocatalytically. 6K1 is essential for proper proteolytic separation of P3 from CI.

It is found in the host cytoplasmic vesicle. The protein localises to the virion. It catalyses the reaction RNA(n) + a ribonucleoside 5'-triphosphate = RNA(n+1) + diphosphate. The catalysed reaction is Hydrolyzes glutaminyl bonds, and activity is further restricted by preferences for the amino acids in P6 - P1' that vary with the species of potyvirus, e.g. Glu-Xaa-Xaa-Tyr-Xaa-Gln-|-(Ser or Gly) for the enzyme from tobacco etch virus. The natural substrate is the viral polyprotein, but other proteins and oligopeptides containing the appropriate consensus sequence are also cleaved.. It carries out the reaction Hydrolyzes a Gly-|-Gly bond at its own C-terminus, commonly in the sequence -Tyr-Xaa-Val-Gly-|-Gly, in the processing of the potyviral polyprotein.. Its function is as follows. Required for aphid transmission and also has proteolytic activity. Only cleaves a Gly-Gly dipeptide at its own C-terminus. Interacts with virions and aphid stylets. Acts as a suppressor of RNA-mediated gene silencing, also known as post-transcriptional gene silencing (PTGS), a mechanism of plant viral defense that limits the accumulation of viral RNAs. May have RNA-binding activity. Functionally, has helicase activity. It may be involved in replication. Indispensable for virus replication. Reduces the abundance of host transcripts related to jasmonic acid biosynthesis therefore altering the host defenses. In order to increase its own stability, decreases host protein degradation pathways. In terms of biological role, indispensable for virus replication. Its function is as follows. Mediates the cap-independent, EIF4E-dependent translation of viral genomic RNAs. Binds to the cap-binding site of host EIF4E and thus interferes with the host EIF4E-dependent mRNA export and translation. VPg-RNA directly binds EIF4E and is a template for transcription. Also forms trimeric complexes with EIF4E-EIF4G, which are templates for translation. Functionally, has RNA-binding and proteolytic activities. An RNA-dependent RNA polymerase that plays an essential role in the virus replication. In terms of biological role, involved in aphid transmission, cell-to-cell and systemis movement, encapsidation of the viral RNA and in the regulation of viral RNA amplification. The sequence is that of Genome polyprotein from Brome streak virus (strain 11-Cal) (BStV).